The sequence spans 110 residues: Protein YcgL (110 aa).

Residues 14–98 (MFCVIYRSSK…PPEDLLKQHL (85 aa)) form the YcgL domain. Residues 88–110 (PPPEDLLKQHLSSVGQNTSHADR) are disordered. Residues 97–110 (HLSSVGQNTSHADR) are compositionally biased toward polar residues.

The polypeptide is Protein YcgL (Salmonella schwarzengrund (strain CVM19633)).